Consider the following 886-residue polypeptide: KH domain-containing protein hrpk-2 (886 aa).

Over residues 359–368 (DNHFYNDKDS) the composition is skewed to basic and acidic residues. The disordered stretch occupies residues 359–433 (DNHFYNDKDS…SHRKESACVD (75 aa)). Composition is skewed to basic residues over residues 369 to 388 (GKHH…KKHY) and 415 to 425 (HERKKRQRSSH). KH domains are found at residues 698–761 (KETV…IEKI) and 775–839 (PGIF…AYLT).

The sequence is that of KH domain-containing protein hrpk-2 from Caenorhabditis elegans.